The sequence spans 257 residues: Protein KlaA (257 aa).

In terms of biological role, belongs to the kla operon, which is associated with cryptic tellurite resistance, and IncW plasmid fertility inhibition. The chain is Protein KlaA (klaA) from Escherichia coli.